The sequence spans 200 residues: Recombination protein RecR (200 aa).

Residues 57 to 72 (CSQCRTFTEQETCAIC) form a C4-type zinc finger. The 96-residue stretch at 81 to 176 (GLLCVVEMPA…KVSRIAHGIP (96 aa)) folds into the Toprim domain.

The protein belongs to the RecR family.

Its function is as follows. May play a role in DNA repair. It seems to be involved in an RecBC-independent recombinational process of DNA repair. It may act with RecF and RecO. The protein is Recombination protein RecR of Actinobacillus succinogenes (strain ATCC 55618 / DSM 22257 / CCUG 43843 / 130Z).